Consider the following 129-residue polypeptide: Calcitonin gene-related peptide 2 (129 aa).

An N-terminal signal peptide occupies residues 1-25; that stretch reads MGFGKPSSFLAFSILVLCQAGSLQA. Positions 26–81 are excised as a propeptide; sequence QPLRSSLESLPDPAALSEKEGRLLLAALVKAYVQRKTNELEQEQEQEMEGSSLTAQ. Cys85 and Cys90 are joined by a disulfide. Phe120 carries the phenylalanine amide modification. The propeptide occupies 126-129; it reads DLQA.

The protein belongs to the calcitonin family.

The protein localises to the secreted. In terms of biological role, CALCB/CGRP2 is a peptide hormone that induces vasodilation mediated by the CALCRL-RAMP1 receptor complex. Dilates a variety of vessels including the coronary, cerebral and systemic vasculature. Its abundance in the CNS also points toward a neurotransmitter or neuromodulator role. This chain is Calcitonin gene-related peptide 2 (CALCB), found in Equus caballus (Horse).